The primary structure comprises 349 residues: Putative nuclease HARBI1 (349 aa).

The a divalent metal cation site is built by aspartate 149, aspartate 199, aspartate 225, and glutamate 261. Residues 149–300 (DCIHVAIKAP…IILACCVLHN (152 aa)) enclose the DDE Tnp4 domain.

It belongs to the HARBI1 family. As to quaternary structure, interacts with NAIF1. Requires a divalent metal cation as cofactor. As to expression, detected in adult brain, eye, nerve tissue and lung. Detected in embryo.

It localises to the nucleus. Its subcellular location is the cytoplasm. Its function is as follows. Transposase-derived protein that may have nuclease activity (Potential). Does not have transposase activity. This is Putative nuclease HARBI1 (Harbi1) from Mus musculus (Mouse).